The sequence spans 599 residues: Elongation factor 4 (599 aa).

The tr-type G domain occupies S5–K187. GTP is bound by residues D17–T22 and N134–D137.

This sequence belongs to the TRAFAC class translation factor GTPase superfamily. Classic translation factor GTPase family. LepA subfamily.

The protein localises to the cell inner membrane. The catalysed reaction is GTP + H2O = GDP + phosphate + H(+). Required for accurate and efficient protein synthesis under certain stress conditions. May act as a fidelity factor of the translation reaction, by catalyzing a one-codon backward translocation of tRNAs on improperly translocated ribosomes. Back-translocation proceeds from a post-translocation (POST) complex to a pre-translocation (PRE) complex, thus giving elongation factor G a second chance to translocate the tRNAs correctly. Binds to ribosomes in a GTP-dependent manner. The chain is Elongation factor 4 from Roseobacter denitrificans (strain ATCC 33942 / OCh 114) (Erythrobacter sp. (strain OCh 114)).